Reading from the N-terminus, the 457-residue chain is UPF0210 protein Sfum_2948 (457 aa).

This sequence belongs to the UPF0210 family. Homodimer.

The polypeptide is UPF0210 protein Sfum_2948 (Syntrophobacter fumaroxidans (strain DSM 10017 / MPOB)).